The sequence spans 279 residues: F420-dependent methylenetetrahydromethanopterin dehydrogenase (279 aa).

Belongs to the MTD family.

It carries out the reaction 5,10-methylenetetrahydromethanopterin + oxidized coenzyme F420-(gamma-L-Glu)(n) + 2 H(+) = 5,10-methenyl-5,6,7,8-tetrahydromethanopterin + reduced coenzyme F420-(gamma-L-Glu)(n). It participates in one-carbon metabolism; methanogenesis from CO(2); 5,10-methylene-5,6,7,8-tetrahydromethanopterin from 5,10-methenyl-5,6,7,8-tetrahydromethanopterin (coenzyme F420 route): step 1/1. Catalyzes the reversible reduction of methenyl-H(4)MPT(+) to methylene-H(4)MPT. The protein is F420-dependent methylenetetrahydromethanopterin dehydrogenase (mtd) of Methanosarcina mazei (strain ATCC BAA-159 / DSM 3647 / Goe1 / Go1 / JCM 11833 / OCM 88) (Methanosarcina frisia).